Here is a 488-residue protein sequence, read N- to C-terminus: N-succinylglutamate 5-semialdehyde dehydrogenase (488 aa).

NAD(+) is bound at residue 221-226 (GSSRTG). Catalysis depends on residues Glu-244 and Cys-278.

The protein belongs to the aldehyde dehydrogenase family. AstD subfamily.

It catalyses the reaction N-succinyl-L-glutamate 5-semialdehyde + NAD(+) + H2O = N-succinyl-L-glutamate + NADH + 2 H(+). It functions in the pathway amino-acid degradation; L-arginine degradation via AST pathway; L-glutamate and succinate from L-arginine: step 4/5. Its function is as follows. Catalyzes the NAD-dependent reduction of succinylglutamate semialdehyde into succinylglutamate. This is N-succinylglutamate 5-semialdehyde dehydrogenase from Pseudomonas fluorescens (strain ATCC BAA-477 / NRRL B-23932 / Pf-5).